Here is a 291-residue protein sequence, read N- to C-terminus: Protease HtpX (291 aa).

2 consecutive transmembrane segments (helical) span residues 4 to 24 (IALF…VLNI) and 36 to 56 (LSGL…ISLM). His-143 is a binding site for Zn(2+). Residue Glu-144 is part of the active site. His-147 contacts Zn(2+). 2 helical membrane passes run 151–171 (GDMI…IFLS) and 199–219 (FIVS…LTMW). A Zn(2+)-binding site is contributed by Glu-225.

It belongs to the peptidase M48B family. The cofactor is Zn(2+).

The protein resides in the cell inner membrane. The protein is Protease HtpX of Aliivibrio fischeri (strain MJ11) (Vibrio fischeri).